Consider the following 258-residue polypeptide: Acidic leucine-rich nuclear phosphoprotein 32 family member E (258 aa).

N-acetylmethionine is present on Met1. LRR repeat units lie at residues 18–38 (EVTELVLDNCLCVNGEIEGLN), 43–64 (ELEFLSMANVELSSLARLPSLN), 65–87 (KLRKLELSDNIISGGLEVLAEKC), and 89–110 (NLTYLNLSGNKIKDLSTVEALQ). Lys68 is covalently cross-linked (Glycyl lysine isopeptide (Lys-Gly) (interchain with G-Cter in SUMO2)). Residues 123–161 (CEITNLEDYRESIFELLQQITYLDGFDQEDNEAPDSEEE) form the LRRCT domain. Acidic residues-rich tracts occupy residues 149-206 (DQED…EEEV) and 216-238 (IQDEEDDDDYVDEGEEEEEEEEE). The interval 149-258 (DQEDNEAPDS…AEDDGEEDDD (110 aa)) is disordered. The tract at residues 205 to 258 (EVGLSYLMKEEIQDEEDDDDYVDEGEEEEEEEEEGPRGEKRKRDAEDDGEEDDD) is ZID domain. The segment covering 239–249 (GPRGEKRKRDA) has biased composition (basic and acidic residues).

Belongs to the ANP32 family. Component of a SWR1-like complex, composed of EP400, KAT5/TIP60, TRRAP, BRD8, RUVBL1, RUVBL2, ING3 and ANP32E; the complex does not contain SRCAP. Interacts with H2A.Z/H2AZ1. Interacts with the importin alpha KPNA1 and KPNA2. Phosphorylated. The phosphorylation is nuclear localization signal (NLS)-dependent.

Its subcellular location is the cytoplasm. It localises to the nucleus. In terms of biological role, histone chaperone that specifically mediates the genome-wide removal of histone H2A.Z/H2AZ1 from the nucleosome: removes H2A.Z/H2AZ1 from its normal sites of deposition, especially from enhancer and insulator regions. Not involved in deposition of H2A.Z/H2AZ1 in the nucleosome. May stabilize the evicted H2A.Z/H2AZ1-H2B dimer, thus shifting the equilibrium towards dissociation and the off-chromatin state. Inhibits activity of protein phosphatase 2A (PP2A). Does not inhibit protein phosphatase 1. May play a role in cerebellar development and synaptogenesis. The polypeptide is Acidic leucine-rich nuclear phosphoprotein 32 family member E (Anp32e) (Rattus norvegicus (Rat)).